The following is a 285-amino-acid chain: Nucleotide-binding protein Geob_2284 (285 aa).

8 to 15 (GLSGSGKS) provides a ligand contact to ATP. Position 59–62 (59–62 (DIRG)) interacts with GTP.

It belongs to the RapZ-like family.

In terms of biological role, displays ATPase and GTPase activities. The sequence is that of Nucleotide-binding protein Geob_2284 from Geotalea daltonii (strain DSM 22248 / JCM 15807 / FRC-32) (Geobacter daltonii).